A 220-amino-acid polypeptide reads, in one-letter code: Large ribosomal subunit protein bL21c (220 aa).

Belongs to the bacterial ribosomal protein bL21 family. Part of the 50S ribosomal subunit.

It is found in the plastid. It localises to the chloroplast. Its function is as follows. This protein binds to 23S ribosomal RNA in the presence of protein L20. The sequence is that of Large ribosomal subunit protein bL21c (RPL21) from Arabidopsis thaliana (Mouse-ear cress).